The sequence spans 40 residues: Alpha-conotoxin GIC (40 aa).

Positions 1 to 20 (SDGRNDAAKAFDLISSTVKK) are excised as a propeptide. Disulfide bonds link Cys-22/Cys-28 and Cys-23/Cys-36. The ser-Xaa-Pro motif, crucial for potent interaction with nAChR stretch occupies residues 24–26 (SHP). Residue Cys-36 is modified to Cysteine amide.

In terms of tissue distribution, expressed by the venom duct.

The protein resides in the secreted. Alpha-conotoxins bind to the nicotinic acetylcholine receptors (nAChR) and inhibit them. This toxin reversibly blocks neuronal nAChRs (alpha-3/beta-2 = alpha-6 or -3/beta-2 or -3 &gt; alpha-3/beta-4 = alpha-4/beta-2). The sequence is that of Alpha-conotoxin GIC from Conus geographus (Geography cone).